We begin with the raw amino-acid sequence, 722 residues long: NCK-interacting protein with SH3 domain (722 aa).

Residues 1–58 enclose the SH3 domain; the sequence is MYRALYAFRSAEPNALAFAAGETFLVLERSSAHWWLAARARSGETGYVPPAYLRRLQG. Disordered stretches follow at residues 101–122 and 149–286; these read KETL…SSTS and PSSE…ASDD. Residues 110 to 121 show a composition bias toward low complexity; that stretch reads SASSVAVMTSST. The residue at position 120 (serine 120) is a Phosphoserine. Residues 169 to 185 show a composition bias toward pro residues; it reads QIPPQPRRAAPTTPPPP. The short motif at 175–192 is the Nuclear localization signal element; it reads RRAAPTTPPPPVKRRDRE. At threonine 181 the chain carries Phosphothreonine. The span at 206–240 shows a compositional bias: low complexity; sequence PSGGNSVSSGSSVSSTSLDTLYTSSSPSEPGSSCS. Position 294 is a phosphoserine (serine 294).

In terms of assembly, associates with the intermediate filaments, vimentin and desmin. Binds the first and third SH3 domains of NCK. Binds the proline-rich domains of N-WASP through its SH3 domain. Similarly, binds diaphanous protein homolog 1 (DRF1). Binds the SH3 domains of GRB2 through its proline-rich domains. Interacts with Helicobacter pylori toxin vacA. Isoform 4 interacts with FHOD1. Interacts with FASLG. Interacts with TMIGD2. Highest expression in heart, brain, skeletal muscle, kidney and liver. Lower levels in placenta, lung, small intestine and leukocytes. Weak expression in colon, thymus and spleen.

It is found in the nucleus. Its function is as follows. Has an important role in stress fiber formation induced by active diaphanous protein homolog 1 (DRF1). Induces microspike formation, in vivo. In vitro, stimulates N-WASP-induced ARP2/3 complex activation in the absence of CDC42. May play an important role in the maintenance of sarcomeres and/or in the assembly of myofibrils into sarcomeres. Implicated in regulation of actin polymerization and cell adhesion. Plays a role in angiogenesis. The sequence is that of NCK-interacting protein with SH3 domain (NCKIPSD) from Homo sapiens (Human).